The chain runs to 209 residues: Small ribosomal subunit protein uS4 (209 aa).

The span at 1–13 (MSTKSRTRSKTRL) shows a compositional bias: basic residues. 2 disordered regions span residues 1–20 (MSTK…LGIP) and 28–49 (YLEK…QDSD). The S4 RNA-binding domain maps to 95 to 176 (QRLDALVVRS…PKLPSYLEVE (82 aa)).

This sequence belongs to the universal ribosomal protein uS4 family. In terms of assembly, part of the 30S ribosomal subunit. Contacts protein S5. The interaction surface between S4 and S5 is involved in control of translational fidelity.

Its function is as follows. One of the primary rRNA binding proteins, it binds directly to 16S rRNA where it nucleates assembly of the body of the 30S subunit. With S5 and S12 plays an important role in translational accuracy. The protein is Small ribosomal subunit protein uS4 of Clavibacter michiganensis subsp. michiganensis (strain NCPPB 382).